Reading from the N-terminus, the 146-residue chain is Deoxyuridine 5'-triphosphate nucleotidohydrolase (146 aa).

Residues 66 to 68 (RSG), asparagine 79, 83 to 85 (TID), and lysine 93 contribute to the substrate site.

It belongs to the dUTPase family. Mg(2+) is required as a cofactor.

The catalysed reaction is dUTP + H2O = dUMP + diphosphate + H(+). The protein operates within pyrimidine metabolism; dUMP biosynthesis; dUMP from dCTP (dUTP route): step 2/2. This enzyme is involved in nucleotide metabolism: it produces dUMP, the immediate precursor of thymidine nucleotides and it decreases the intracellular concentration of dUTP so that uracil cannot be incorporated into DNA. The chain is Deoxyuridine 5'-triphosphate nucleotidohydrolase from Zymomonas mobilis subsp. mobilis (strain ATCC 31821 / ZM4 / CP4).